We begin with the raw amino-acid sequence, 214 residues long: tRNA (guanine-N(7)-)-methyltransferase (214 aa).

Positions 43, 68, 95, and 117 each coordinate S-adenosyl-L-methionine. Residue Asp117 is part of the active site. Substrate-binding positions include Lys121, Asp153, and 191 to 194; that span reads TEYE.

Belongs to the class I-like SAM-binding methyltransferase superfamily. TrmB family.

The enzyme catalyses guanosine(46) in tRNA + S-adenosyl-L-methionine = N(7)-methylguanosine(46) in tRNA + S-adenosyl-L-homocysteine. It participates in tRNA modification; N(7)-methylguanine-tRNA biosynthesis. Functionally, catalyzes the formation of N(7)-methylguanine at position 46 (m7G46) in tRNA. This Brevibacillus brevis (strain 47 / JCM 6285 / NBRC 100599) protein is tRNA (guanine-N(7)-)-methyltransferase.